Consider the following 67-residue polypeptide: MKLTCVLIAAVLLLAVCQLDSADATAYMRKDPSLRSPKRTRGCKTKGTWCWASRECCLKDCLFVCVY.

A signal peptide spans 1–24 (MKLTCVLIAAVLLLAVCQLDSADA). Positions 25-37 (TAYMRKDPSLRSP) are excised as a propeptide. 3 disulfide bridges follow: Cys-43/Cys-57, Cys-50/Cys-61, and Cys-56/Cys-65.

It belongs to the conotoxin O1 superfamily. In terms of tissue distribution, expressed by the venom duct.

Its subcellular location is the secreted. This Californiconus californicus (California cone) protein is Conotoxin Cl6.10.